We begin with the raw amino-acid sequence, 663 residues long: Beta-galactosidase YesZ (663 aa).

A substrate-binding site is contributed by Arg107. Cys111 contacts Zn(2+). Asn145 contacts substrate. Residue Glu146 is the Proton donor of the active site. Zn(2+) contacts are provided by Cys154, Cys156, and Cys159. Glu297 (nucleophile) is an active-site residue. 346–349 (EQPH) contacts substrate.

The protein belongs to the glycosyl hydrolase 42 family. In terms of assembly, homotrimer.

It catalyses the reaction Hydrolysis of terminal non-reducing beta-D-galactose residues in beta-D-galactosides.. Functionally, may play a role in the degradation of rhamnogalacturonan derived from plant cell walls. This Bacillus licheniformis (strain ATCC 14580 / DSM 13 / JCM 2505 / CCUG 7422 / NBRC 12200 / NCIMB 9375 / NCTC 10341 / NRRL NRS-1264 / Gibson 46) protein is Beta-galactosidase YesZ (yesZ).